Reading from the N-terminus, the 880-residue chain is Alanine--tRNA ligase (880 aa).

Zn(2+)-binding residues include H548, H552, C651, and H655.

It belongs to the class-II aminoacyl-tRNA synthetase family. The cofactor is Zn(2+).

Its subcellular location is the cytoplasm. It catalyses the reaction tRNA(Ala) + L-alanine + ATP = L-alanyl-tRNA(Ala) + AMP + diphosphate. In terms of biological role, catalyzes the attachment of alanine to tRNA(Ala) in a two-step reaction: alanine is first activated by ATP to form Ala-AMP and then transferred to the acceptor end of tRNA(Ala). Also edits incorrectly charged Ser-tRNA(Ala) and Gly-tRNA(Ala) via its editing domain. The protein is Alanine--tRNA ligase of Tropheryma whipplei (strain TW08/27) (Whipple's bacillus).